We begin with the raw amino-acid sequence, 119 residues long: Large ribosomal subunit protein bL20 (119 aa).

It belongs to the bacterial ribosomal protein bL20 family.

Binds directly to 23S ribosomal RNA and is necessary for the in vitro assembly process of the 50S ribosomal subunit. It is not involved in the protein synthesizing functions of that subunit. In Clostridium tetani (strain Massachusetts / E88), this protein is Large ribosomal subunit protein bL20.